The following is a 308-amino-acid chain: 4-hydroxy-3-methylbut-2-enyl diphosphate reductase (308 aa).

[4Fe-4S] cluster is bound at residue Cys-13. The (2E)-4-hydroxy-3-methylbut-2-enyl diphosphate site is built by His-42 and His-75. Positions 42 and 75 each coordinate dimethylallyl diphosphate. Residues His-42 and His-75 each coordinate isopentenyl diphosphate. Cys-97 is a [4Fe-4S] cluster binding site. His-125 provides a ligand contact to (2E)-4-hydroxy-3-methylbut-2-enyl diphosphate. His-125 lines the dimethylallyl diphosphate pocket. His-125 provides a ligand contact to isopentenyl diphosphate. The active-site Proton donor is Glu-127. Thr-165 is a binding site for (2E)-4-hydroxy-3-methylbut-2-enyl diphosphate. Cys-195 lines the [4Fe-4S] cluster pocket. (2E)-4-hydroxy-3-methylbut-2-enyl diphosphate is bound by residues Ser-223, Ser-224, Asn-225, and Ser-267. 4 residues coordinate dimethylallyl diphosphate: Ser-223, Ser-224, Asn-225, and Ser-267. Residues Ser-223, Ser-224, Asn-225, and Ser-267 each coordinate isopentenyl diphosphate.

The protein belongs to the IspH family. [4Fe-4S] cluster serves as cofactor.

It carries out the reaction isopentenyl diphosphate + 2 oxidized [2Fe-2S]-[ferredoxin] + H2O = (2E)-4-hydroxy-3-methylbut-2-enyl diphosphate + 2 reduced [2Fe-2S]-[ferredoxin] + 2 H(+). The enzyme catalyses dimethylallyl diphosphate + 2 oxidized [2Fe-2S]-[ferredoxin] + H2O = (2E)-4-hydroxy-3-methylbut-2-enyl diphosphate + 2 reduced [2Fe-2S]-[ferredoxin] + 2 H(+). It participates in isoprenoid biosynthesis; dimethylallyl diphosphate biosynthesis; dimethylallyl diphosphate from (2E)-4-hydroxy-3-methylbutenyl diphosphate: step 1/1. The protein operates within isoprenoid biosynthesis; isopentenyl diphosphate biosynthesis via DXP pathway; isopentenyl diphosphate from 1-deoxy-D-xylulose 5-phosphate: step 6/6. In terms of biological role, catalyzes the conversion of 1-hydroxy-2-methyl-2-(E)-butenyl 4-diphosphate (HMBPP) into a mixture of isopentenyl diphosphate (IPP) and dimethylallyl diphosphate (DMAPP). Acts in the terminal step of the DOXP/MEP pathway for isoprenoid precursor biosynthesis. The chain is 4-hydroxy-3-methylbut-2-enyl diphosphate reductase from Chlamydia muridarum (strain MoPn / Nigg).